The chain runs to 2113 residues: Ninein (2113 aa).

2 EF-hand domains span residues 8–43 (QHEARLKELFDSFDTLGTGSLGQEELTDLCHVLCLE) and 42–77 (LEDVGPVLQQTLLQDNLLGRVHFDQFKEALILILSR). Ser-152 carries the post-translational modification Phosphoserine. EF-hand domains lie at 182–217 (WIEEKLQEVCEDLGITRDGHLNRKKLVSICEQYGLQ) and 219–252 (VDGAMLEEVFLSLDPDGTMSVEDFFYGLFKTGKS). 245 to 252 (GLFKTGKS) provides a ligand contact to GTP. Ser-269 carries the phosphoserine modification. Residue 300–304 (DGMGQ) coordinates GTP. The region spanning 317 to 352 (EGIENSQEILKALDFSLDGNINLTELTLALENELLV) is the EF-hand 5 domain. A coiled-coil region spans residues 358 to 570 (HQAALASFKA…YQAQGRVLRL (213 aa)). 420–423 (RKLD) is a GTP binding site. The interval 578 to 599 (EELDGHSGGIEPDQGPGSEECN) is disordered. Coiled-coil stretches lie at residues 620-926 (RDLC…ESQH), 958-1008 (EQLA…STEI), 1175-1323 (EDTR…MEKV), and 1425-1806 (AALL…IDKD). The tract at residues 798–1495 (EMETECNRRV…QDLQITCGEM (698 aa)) is important for interaction with CEP170. Ser-1540 and Ser-1826 each carry phosphoserine. Coiled coils occupy residues 1852-1910 (VQNT…KEQS) and 1971-2093 (REQF…IASL). Disordered stretches follow at residues 1899–1922 (KRECEQSQKEQSPTSRKVGQMGSL) and 1988–2008 (SQHLQEELENRTSETNTPQGN). Basic and acidic residues predominate over residues 1988 to 1999 (SQHLQEELENRT).

As to quaternary structure, homooligomer. Interacts with GSK3B/GSK3-beta via its C-terminal domain. Interacts with C14ORF166, such interaction may prevent its phosphorylation by GSK3B. Interacts with AUNIP (via N-terminus). Identified in a complex with AUNIP and AURKA. Interacts with CCDC120. Interacts (via C-terminus) with CEP250. Interacts with CEP170. Interacts (via N-terminus) with the gamma-tubulin ring complex component TUBGCP3. Interacts with gamma-tubulin. Isoform 4 does not interact with CEP170 or CEP250. In terms of processing, phosphorylated by AURKA/Aurora kinase A and PKA kinases but not CK2 or AURKB/Aurora kinase B. Widely expressed. Highly expressed in spleen, bone marrow and skin. Weakly expressed in liver and small intestine. Expressed in brain.

Its subcellular location is the cytoplasm. The protein resides in the cytoskeleton. It localises to the microtubule organizing center. It is found in the centrosome. The protein localises to the centriole. In terms of biological role, centrosomal protein required for the positioning and anchorage of the microtubule minus-end in epithelial cells. May also act as a centrosome maturation factor. May play a role in microtubule nucleation, by recruiting the gamma-tubulin ring complex to the centrosome. Overexpression does not perturb nucleation or elongation of microtubules but suppresses release of microtubules. Required for centriole organization and microtubule anchoring at the mother centriole. This chain is Ninein, found in Mus musculus (Mouse).